A 33-amino-acid polypeptide reads, in one-letter code: Brevinin-2GRb (33 aa).

In terms of tissue distribution, expressed by the skin glands.

It localises to the secreted. Its function is as follows. Antimicrobial peptide active against the Gram-positive bacterium S.aureus (MIC=25 uM) and against the Gram-negative bacteria E.coli (MIC=6 uM). Has no antifungal activity against C.albicans. Shows hemolytic activity against human erythrocytes only at high concentrations (LC(50)=180 uM). This is Brevinin-2GRb from Odorrana grahami (Yunnanfu frog).